A 485-amino-acid chain; its full sequence is MTITPQQLIALLPLLIVGLTVVVVMLSIAWRRNHFLNATLSVLGLNAALVSLWFVGQNGAMDVTPMIRVDGYAMLYTGLVLLASLATCTFAYPWLEGYKDNKEEFYLLVLIAALGGILLAGANHLAALFLGIELISLPLFGLVGYAFRQKRSLEASIKYTILSAAASSFLLFGMALVYANSGNLSFLALGKSLADNTLHEPLLLAGLGLMIVGLGFKLSLVPFHLWTPDVYQGAPAPVSTFLATASKIAIFGVVMRLFLYMPVGNSEAVRVVLGLIAFASIIFGNLMALSQTNIKRLLGYSSISHLGYLLVALIALQSGEMSMEAVGVYLAGYLFSSLGAFGVVSLMSSPYRGPDADSLFSYRGLFWHRPILSAVMTVMMLSLAGIPMTLGFIGKFYVLAVGVHAHLWWLVAAVVVGSAIGLYYYLRVAVSLYLSAPEQLNRDAPSNWQYSAGGIVVLISALLVLVLGIWPQPLISIVQLATPLM.

A run of 14 helical transmembrane segments spans residues 8–28 (LIAL…MLSI), 35–55 (FLNA…LWFV), 75–95 (LYTG…YPWL), 105–125 (FYLL…ANHL), 127–147 (ALFL…GYAF), 159–179 (YTIL…LVYA), 203–223 (LLAG…LVPF), 235–255 (PAPV…GVVM), 271–291 (VVLG…ALSQ), 297–317 (LLGY…IALQ), 326–346 (VGVY…VVSL), 374–394 (AVMT…GFIG), 408–430 (WWLV…RVAV), and 455–475 (IVVL…QPLI).

This sequence belongs to the complex I subunit 2 family. NDH-1 is composed of 13 different subunits. Subunits NuoA, H, J, K, L, M, N constitute the membrane sector of the complex.

It localises to the cell inner membrane. It carries out the reaction a quinone + NADH + 5 H(+)(in) = a quinol + NAD(+) + 4 H(+)(out). Functionally, NDH-1 shuttles electrons from NADH, via FMN and iron-sulfur (Fe-S) centers, to quinones in the respiratory chain. The immediate electron acceptor for the enzyme in this species is believed to be ubiquinone. Couples the redox reaction to proton translocation (for every two electrons transferred, four hydrogen ions are translocated across the cytoplasmic membrane), and thus conserves the redox energy in a proton gradient. This chain is NADH-quinone oxidoreductase subunit N, found in Klebsiella pneumoniae (strain 342).